Here is a 265-residue protein sequence, read N- to C-terminus: Probable trehalose-phosphate phosphatase (265 aa).

Asp-35 acts as the Nucleophile in catalysis. The Mg(2+) site is built by Asp-35, Asp-37, and Asp-213. 35–37 (DID) contributes to the substrate binding site.

This sequence belongs to the trehalose phosphatase family. Requires Mg(2+) as cofactor.

It catalyses the reaction alpha,alpha-trehalose 6-phosphate + H2O = alpha,alpha-trehalose + phosphate. It functions in the pathway glycan biosynthesis; trehalose biosynthesis. Its function is as follows. Removes the phosphate from trehalose 6-phosphate to produce free trehalose. This is Probable trehalose-phosphate phosphatase (otsB) from Sinorhizobium fredii (strain NBRC 101917 / NGR234).